The primary structure comprises 242 residues: TLC domain-containing protein 5 (242 aa).

Transmembrane regions (helical) follow at residues 3–23 (LFIV…LLLC), 37–57 (LVTL…GFIA), 74–94 (ILTL…CVYF), 109–129 (IFGI…CAVL), 154–174 (LAGD…RIGV), and 190–210 (LIVK…MVDI). The TLC domain maps to 28–219 (GRDSEWNCRL…IARFACRKTC (192 aa)).

It belongs to the TLCD5 family.

Its subcellular location is the membrane. The sequence is that of TLC domain-containing protein 5 (tlcd5) from Danio rerio (Zebrafish).